Consider the following 249-residue polypeptide: MIVTNDQELEGLKKIGRIVALAREEMKRKAEPGMSTKDLDLIGKAVLDEHGAVSAPEKEYDFPGVTCISVNDEVAHGIPSTSKILKAGDLVNIDISAEFGGFYSDTGISFVLGEGEERLHKLCQCAENAFQKGLQQAKAGKRQNQIGRAVYHEARSQGFTVIKTLTGHGIGRSLHEAPNHIMNYYDPFDNALFKNGTVIALEPFISTKAETIVEAGDGWTFKTPDKSMVAQVEHTIVITKDEPIILTKL.

H76 serves as a coordination point for substrate. Residues D94, D105, and H168 each contribute to the a divalent metal cation site. A substrate-binding site is contributed by H175. A divalent metal cation contacts are provided by E202 and E233.

As to quaternary structure, monomer. It depends on Co(2+) as a cofactor. The cofactor is Zn(2+). Mn(2+) is required as a cofactor. Fe(2+) serves as cofactor.

The protein localises to the cytoplasm. The enzyme catalyses Release of N-terminal amino acids, preferentially methionine, from peptides and arylamides.. In terms of biological role, removes the N-terminal methionine from nascent proteins. The N-terminal methionine is often cleaved when the second residue in the primary sequence is small and uncharged (Met-Ala-, Cys, Gly, Pro, Ser, Thr, or Val). Requires deformylation of the N(alpha)-formylated initiator methionine before it can be hydrolyzed. This Bacillus subtilis (strain 168) protein is Methionine aminopeptidase 2.